The primary structure comprises 191 residues: Ribosomal RNA small subunit methyltransferase G (191 aa).

S-adenosyl-L-methionine contacts are provided by residues Gly62, Phe67, 111–112 (IE), and Arg124.

The protein belongs to the methyltransferase superfamily. RNA methyltransferase RsmG family.

The protein localises to the cytoplasm. The catalysed reaction is guanosine(527) in 16S rRNA + S-adenosyl-L-methionine = N(7)-methylguanosine(527) in 16S rRNA + S-adenosyl-L-homocysteine. Specifically methylates the N7 position of guanine in position 527 of 16S rRNA. The polypeptide is Ribosomal RNA small subunit methyltransferase G (Rickettsia typhi (strain ATCC VR-144 / Wilmington)).